Here is a 466-residue protein sequence, read N- to C-terminus: Chromogranin-A (466 aa).

An N-terminal signal peptide occupies residues 1–18 (MRSSAALALLLCAGQVFA). Cys-35 and Cys-56 are oxidised to a cystine. The segment at 91-443 (AQQQQQQQQQ…ANRRAEDQEL (353 aa)) is disordered. Over residues 92–111 (QQQQQQQQQQQQQQQQQQQQ) the composition is skewed to low complexity. Position 114 is a phosphoserine (Ser-114). The span at 131–155 (KHGDAASEAPSKDTVEKREDSDKGQ) shows a compositional bias: basic and acidic residues. Positions 177–213 (ESSMMGNSQSPGEDTANNTQSPTSLPSQEHGIPQTTE) are enriched in polar residues. Phosphoserine is present on Ser-215. Residues 233–247 (KEEEEEEKEEEEEEK) are compositionally biased toward acidic residues. The segment covering 248-259 (EEKAIAREKAGP) has biased composition (basic and acidic residues). Ser-288 and Ser-312 each carry phosphoserine. Positions 305-314 (GKGELEHSQQ) are enriched in basic and acidic residues. Glycine amide is present on Gly-332. A compositionally biased stretch (basic and acidic residues) spans 351–378 (RLSREWEDKRWSRMDQLAKELTAEKRLE). A phosphoserine mark is found at Ser-353 and Ser-386. Met-387 carries the post-translational modification Methionine sulfoxide. Residues 412–440 (SSREDSVEARGDFEEKKEEEGSANRRAED) show a composition bias toward basic and acidic residues. 3 positions are modified to phosphoserine: Ser-413, Ser-417, and Ser-433. Ser-433 is a glycosylation site (O-linked (Xyl...) (chondroitin sulfate) serine). The residue at position 441 (Gln-441) is a Pyrrolidone carboxylic acid. Ser-447 bears the Phosphoserine mark.

Belongs to the chromogranin/secretogranin protein family. Self-interacts; self-assembly is promoted in vitro by chondroitin sulfate attachment which occurs at mildly acidic pH conditions. Interacts with SCG3; this interaction is optimal in conditions mimicking the lumenal milieu of the trans-Golgi network, i.e. pH 5.5 and 10 mM Ca(+2). Interacts with ITPR1 in the secretory granules. In terms of processing, O-glycosylated; contains chondroitin sulfate (CS). CS attachment is pH-dependent, being observed at mildly acidic conditions of pH 5 but not at neutral pH, and promotes self-assembly in vitro. Expressed in the brain and adrenal and pituitary glands.

The protein localises to the cytoplasmic vesicle. Its subcellular location is the secretory vesicle. It is found in the neuronal dense core vesicle. The protein resides in the secreted. Functionally, strongly inhibits glucose induced insulin release from the pancreas. Catestatin inhibits catecholamine release from chromaffin cells and noradrenergic neurons by acting as a non-competitive nicotinic cholinergic antagonist. Can induce mast cell migration, degranulation and production of cytokines and chemokines. In terms of biological role, serpinin regulates granule biogenesis in endocrine cells by up-regulating the transcription of protease nexin 1 (SERPINE2) via a cAMP-PKA-SP1 pathway. This leads to inhibition of granule protein degradation in the Golgi complex which in turn promotes granule formation. Serpinin and pGlu-serpinin can enhance both myocardial contractility (inotropy) and relaxation (lusitropy) and this cardio-stimulation requires a beta 1-adrenergic receptor/adenylate cyclase/cAMP/PKA pathway. The polypeptide is Chromogranin-A (Chga) (Rattus norvegicus (Rat)).